The chain runs to 303 residues: Elongation factor Ts (303 aa).

The segment at 81 to 84 (TDFV) is involved in Mg(2+) ion dislocation from EF-Tu.

It belongs to the EF-Ts family.

The protein localises to the cytoplasm. In terms of biological role, associates with the EF-Tu.GDP complex and induces the exchange of GDP to GTP. It remains bound to the aminoacyl-tRNA.EF-Tu.GTP complex up to the GTP hydrolysis stage on the ribosome. This Mesomycoplasma hyopneumoniae (strain 232) (Mycoplasma hyopneumoniae) protein is Elongation factor Ts.